The primary structure comprises 1169 residues: Transcription-repair-coupling factor (1169 aa).

A Helicase ATP-binding domain is found at 634–795 (DMERERPMDR…MLGVRDLSVI (162 aa)). 647-654 (GDVGYGKT) lines the ATP pocket. A DEEQ box motif is present at residues 748–751 (DEEQ). The Helicase C-terminal domain occupies 809 to 970 (VLEQNSNFIK…GFKIAMRDLN (162 aa)).

It in the N-terminal section; belongs to the UvrB family. This sequence in the C-terminal section; belongs to the helicase family. RecG subfamily.

It is found in the cytoplasm. Functionally, couples transcription and DNA repair by recognizing RNA polymerase (RNAP) stalled at DNA lesions. Mediates ATP-dependent release of RNAP and its truncated transcript from the DNA, and recruitment of nucleotide excision repair machinery to the damaged site. The polypeptide is Transcription-repair-coupling factor (Staphylococcus haemolyticus (strain JCSC1435)).